The sequence spans 229 residues: Large ribosomal subunit protein uL1 (229 aa).

This sequence belongs to the universal ribosomal protein uL1 family. In terms of assembly, part of the 50S ribosomal subunit.

Binds directly to 23S rRNA. The L1 stalk is quite mobile in the ribosome, and is involved in E site tRNA release. Its function is as follows. Protein L1 is also a translational repressor protein, it controls the translation of the L11 operon by binding to its mRNA. The protein is Large ribosomal subunit protein uL1 of Streptococcus agalactiae serotype Ia (strain ATCC 27591 / A909 / CDC SS700).